A 507-amino-acid chain; its full sequence is Alkyl hydroperoxide reductase subunit F (507 aa).

207–222 (DVLIVGGGPASGSAAI) serves as a coordination point for FAD. A disulfide bridge links Cys335 with Cys338. 347 to 361 (DVAVIGGGNSGVEAA) provides a ligand contact to NAD(+). An FAD-binding site is contributed by 467–477 (TNVPGIFAAGD).

The protein belongs to the class-II pyridine nucleotide-disulfide oxidoreductase family. In terms of assembly, homodimer. The cofactor is FAD.

Serves to protect the cell against DNA damage by alkyl hydroperoxides. It can use either NADH or NADPH as electron donor for direct reduction of redox dyes or of alkyl hydroperoxides when combined with the AhpC protein. In Staphylococcus aureus (strain NCTC 8325 / PS 47), this protein is Alkyl hydroperoxide reductase subunit F (ahpF).